Consider the following 326-residue polypeptide: Probable cell division protein WhiA (326 aa).

Residues 275 to 308 (SLEELGQLAEPPMTKDAVAGRIRRLLAMADKRAR) constitute a DNA-binding region (H-T-H motif).

This sequence belongs to the WhiA family.

Involved in cell division and chromosome segregation. The sequence is that of Probable cell division protein WhiA from Saccharopolyspora erythraea (strain ATCC 11635 / DSM 40517 / JCM 4748 / NBRC 13426 / NCIMB 8594 / NRRL 2338).